A 171-amino-acid chain; its full sequence is Synaptonemal complex central element protein 2 (171 aa).

A disordered region spans residues 1-52 (MERHGVAAPPVELKDQEPPAIVESGEHRQSENHEETPGSVAPSASCQLPGPF). A compositionally biased stretch (basic and acidic residues) spans 24–36 (SGEHRQSENHEET). Coiled-coil stretches lie at residues 52–83 (FSSL…DHAL) and 118–146 (QERL…QTVE).

This sequence belongs to the SYCE family. As to quaternary structure, homodimer. Found in a complex with SYCP1 and SYCE1. Interacts with SYCP1 and SYCE1. Interacts with SYCE3. Interacts with TEX12. In terms of tissue distribution, meiotic cells (at protein level). Expressed in the ovary and testis.

It localises to the nucleus. Its subcellular location is the chromosome. Major component of the transverse central element of synaptonemal complexes (SCS), formed between homologous chromosomes during meiotic prophase. Requires SYCP1 in order to be incorporated into the central element. May have a role in the synaptonemal complex assembly, stabilization and recombination. In Mus musculus (Mouse), this protein is Synaptonemal complex central element protein 2 (Syce2).